The following is a 194-amino-acid chain: Xanthine phosphoribosyltransferase (194 aa).

Residues L20 and N27 each coordinate xanthine. 128–132 (ANGQA) provides a ligand contact to 5-phospho-alpha-D-ribose 1-diphosphate. K156 lines the xanthine pocket.

Belongs to the purine/pyrimidine phosphoribosyltransferase family. Xpt subfamily. In terms of assembly, homodimer.

Its subcellular location is the cytoplasm. The catalysed reaction is XMP + diphosphate = xanthine + 5-phospho-alpha-D-ribose 1-diphosphate. Its pathway is purine metabolism; XMP biosynthesis via salvage pathway; XMP from xanthine: step 1/1. Its function is as follows. Converts the preformed base xanthine, a product of nucleic acid breakdown, to xanthosine 5'-monophosphate (XMP), so it can be reused for RNA or DNA synthesis. This is Xanthine phosphoribosyltransferase from Oceanobacillus iheyensis (strain DSM 14371 / CIP 107618 / JCM 11309 / KCTC 3954 / HTE831).